Consider the following 48-residue polypeptide: Small, acid-soluble spore protein O (48 aa).

The interval 1–23 (MVKRKANHVINGMNDAKSQGKGA) is disordered.

The protein belongs to the SspO family.

The protein localises to the spore core. The chain is Small, acid-soluble spore protein O from Bacillus velezensis (strain DSM 23117 / BGSC 10A6 / LMG 26770 / FZB42) (Bacillus amyloliquefaciens subsp. plantarum).